Here is a 341-residue protein sequence, read N- to C-terminus: MMIQEELEATKQQFCIELDQVHSSKDLFDLKVRYLGKKGLFRCFADKLRECPSDQKALMGASINACKTYIEDLIRDKNNAILLAEESAEFLKEKIDITLPGEPQCPGGKHIVKKVLDDVVDIFVHLGFCVREAPNIESEENNFSLLNFEENHPARQMHDTFYLDAKTVLRTHTSNVQVRELSRGEPPIKVVAPGLCFRNEDISARSHVIFHQVEAFYVDRNVTLSDLTEMLTEFYHTFFERKIELRLRHSYFPFVEPGIEVDVSCECQAAGCSLCKHTGWLEVAGAGMIHPQVLRNSGVDPETYTGYAVGMGIERLAMLKHGISDIRLFCENDLRFLQQFS.

Glutamate 256 lines the Mg(2+) pocket.

The protein belongs to the class-II aminoacyl-tRNA synthetase family. Phe-tRNA synthetase alpha subunit type 1 subfamily. As to quaternary structure, tetramer of two alpha and two beta subunits. It depends on Mg(2+) as a cofactor.

The protein resides in the cytoplasm. The enzyme catalyses tRNA(Phe) + L-phenylalanine + ATP = L-phenylalanyl-tRNA(Phe) + AMP + diphosphate + H(+). The protein is Phenylalanine--tRNA ligase alpha subunit of Chlamydia caviae (strain ATCC VR-813 / DSM 19441 / 03DC25 / GPIC) (Chlamydophila caviae).